Reading from the N-terminus, the 151-residue chain is UPF0756 membrane protein Aflv_0503 (151 aa).

The next 4 membrane-spanning stretches (helical) occupy residues 4-24, 52-72, 85-105, and 115-135; these read FIFL…SLII, LGVT…KIGF, WIAM…VALL, and LVLG…GPLI.

The protein belongs to the UPF0756 family.

It localises to the cell membrane. The chain is UPF0756 membrane protein Aflv_0503 from Anoxybacillus flavithermus (strain DSM 21510 / WK1).